The sequence spans 691 residues: Leucine-rich repeat and WD repeat-containing protein 1 (691 aa).

LRR repeat units follow at residues 22–45 (DLKK…LFSQ), 48–69 (NLDE…LGLH), and 70–91 (NLRI…KQFP). The tract at residues 202–291 (GKKRDSADDC…QSNESSAKIN (90 aa)) is disordered. Composition is skewed to polar residues over residues 255–264 (TSTQGTPSKS) and 276–291 (STPS…AKIN). WD repeat units follow at residues 426 to 466 (AHKK…CDYN), 476 to 516 (DTTS…KQGR), 535 to 574 (NDFH…KTRK), 593 to 632 (SSET…ADLQ), and 659 to 691 (VEKT…WKIK).

Belongs to the LRWD1 family. In terms of assembly, component of the ORC complex.

The protein localises to the nucleus. It localises to the chromosome. Its subcellular location is the centromere. The protein resides in the telomere. It is found in the cytoplasm. The protein localises to the cytoskeleton. It localises to the microtubule organizing center. Its subcellular location is the centrosome. The protein resides in the kinetochore. Functionally, required for G1/S transition. Recruits and stabilizes the origin recognition complex (ORC) onto chromatin during G1 to establish pre-replication complex (preRC) and to heterochromatic sites in post-replicated cells. Binds a combination of DNA and histone methylation repressive marks on heterochromatin. Required for silencing of major satellite repeats. May be important ORC2, ORC3 and ORC4 stability. The sequence is that of Leucine-rich repeat and WD repeat-containing protein 1 (lrwd1) from Xenopus tropicalis (Western clawed frog).